The following is a 1801-amino-acid chain: Focadhesin (1801 aa).

The residue at position 819 (lysine 819) is an N6-acetyllysine.

As to quaternary structure, interacts with VCL. As to expression, ubiquitous. High expression in brain followed by testis, muscle, pancreas, heart, ovary, small intestine, placenta, prostate, thymus, kidney, colon, liver, lung, spleen and leukocytes. Expression is reduced in most glioblastomas and all glioblastoma cell lines.

The protein localises to the cell junction. It is found in the focal adhesion. The protein resides in the cytoplasm. Its subcellular location is the cytosol. Required for the maintenance of SKIC2 and SKIC3 proteostatic levels in the liver. May be involved in the regulation of RNA degradation by the exosome complex. Potential tumor suppressor in gliomas. The protein is Focadhesin of Homo sapiens (Human).